The following is a 512-amino-acid chain: Cytochrome P450 72A11 (512 aa).

The chain crosses the membrane as a helical span at residues 2–22 (EISVASVTVSVAVVVVSWWVW). Position 460 (Cys460) interacts with heme.

It belongs to the cytochrome P450 family. It depends on heme as a cofactor.

The protein localises to the membrane. The chain is Cytochrome P450 72A11 (CYP72A11) from Arabidopsis thaliana (Mouse-ear cress).